The sequence spans 131 residues: Small ribosomal subunit protein uS12 (131 aa).

Positions 1–22 are disordered; the sequence is MPTTQQLLRKGRKVLQKKSKVP. Positions 9 to 20 are enriched in basic residues; it reads RKGRKVLQKKSK. A 3-methylthioaspartic acid modification is found at D89. The disordered stretch occupies residues 102–131; it reads LDTQGVKDRNKSRSKYGTKKPKAGAAAAKK. The span at 113-131 shows a compositional bias: basic residues; the sequence is SRSKYGTKKPKAGAAAAKK.

It belongs to the universal ribosomal protein uS12 family. Part of the 30S ribosomal subunit. Contacts proteins S8 and S17. May interact with IF1 in the 30S initiation complex.

With S4 and S5 plays an important role in translational accuracy. In terms of biological role, interacts with and stabilizes bases of the 16S rRNA that are involved in tRNA selection in the A site and with the mRNA backbone. Located at the interface of the 30S and 50S subunits, it traverses the body of the 30S subunit contacting proteins on the other side and probably holding the rRNA structure together. The combined cluster of proteins S8, S12 and S17 appears to hold together the shoulder and platform of the 30S subunit. The protein is Small ribosomal subunit protein uS12 of Deinococcus radiodurans (strain ATCC 13939 / DSM 20539 / JCM 16871 / CCUG 27074 / LMG 4051 / NBRC 15346 / NCIMB 9279 / VKM B-1422 / R1).